The sequence spans 132 residues: Phycocyanin PC645 alpha-1 subunit (132 aa).

Positions 54 and 68 each coordinate (2R,3E)-phycocyanobilin. 4 residues coordinate mesobiliverdin: cysteine 70, glutamine 76, tyrosine 77, and lysine 92. Proline 123 and isoleucine 125 together coordinate 15,16-dihydrobiliverdin.

Belongs to the phycoerythrin family. In terms of assembly, heterotetramer of 2 different alpha chains and 2 identical beta chains which form 2 alpha-beta heterodimers within the heterotetramer. Post-translationally, contains two phycocyanobilin chromophores, one mesobiliverdin chromophore and one 15,16-dihydrobiliverdin chromophore with binding mediated by both the alpha and beta subunits.

Its subcellular location is the plastid. The protein localises to the chloroplast thylakoid membrane. Functionally, light-harvesting photosynthetic tetrapyrrole chromophore-protein from the phycobiliprotein complex. The sequence is that of Phycocyanin PC645 alpha-1 subunit from Chroomonas sp. (strain CCMP270).